The following is a 98-amino-acid chain: MTPTHFTISSAFLLGMMGLAFHRTHLLSALLCLEAMMLALFIALSLWSLQLDATGCSTAPMLMLAFSACEASAGLALLVATARTHGTDHMQALNLLQC.

The next 3 membrane-spanning stretches (helical) occupy residues 1-21, 26-46, and 59-79; these read MTPT…GLAF, LLSA…ALSL, and APML…ALLV.

It belongs to the complex I subunit 4L family.

It is found in the mitochondrion membrane. The enzyme catalyses a ubiquinone + NADH + 5 H(+)(in) = a ubiquinol + NAD(+) + 4 H(+)(out). Its function is as follows. Core subunit of the mitochondrial membrane respiratory chain NADH dehydrogenase (Complex I) which catalyzes electron transfer from NADH through the respiratory chain, using ubiquinone as an electron acceptor. Part of the enzyme membrane arm which is embedded in the lipid bilayer and involved in proton translocation. This Gadus morhua (Atlantic cod) protein is NADH-ubiquinone oxidoreductase chain 4L (MT-ND4L).